A 141-amino-acid chain; its full sequence is Hemoglobin subunit alpha-D (141 aa).

Positions 1 to 141 constitute a Globin domain; that stretch reads MLSADDKKII…VAAVLAEKYR (141 aa). Residues H58 and H87 each contribute to the heme b site.

This sequence belongs to the globin family. As to quaternary structure, heterotetramer of two alpha-D chains and two beta chains. In terms of tissue distribution, red blood cells.

Functionally, involved in oxygen transport from the lung to the various peripheral tissues. The protein is Hemoglobin subunit alpha-D (HBAD) of Anser indicus (Bar-headed goose).